Here is a 529-residue protein sequence, read N- to C-terminus: E3 ubiquitin-protein ligase arih1 (529 aa).

2 disordered regions span residues 1 to 30 (MDSD…EDDL) and 49 to 68 (GICG…GEEE). Positions 51-64 (CGEGGGSALGPGPG) are enriched in gly residues. The interval 77–125 (TAEQILQHMVECIREVNEVIQNPATITRILLSHFNWDKEKLMERYFDGN) is UBA-like. The segment at 154 to 365 (QDMPCQICYL…SAWYNCNRYN (212 aa)) is TRIAD supradomain. Residues C158, C161, C175, H177, C180, C183, C203, C208, C248, C253, C269, C271, C276, C279, H284, C289, C316, and C319 each coordinate Zn(2+). Residues 158–208 (CQICYLNYPNSYFTGLECGHKFCMQCWSEYLTTKIIEEGMGQTISCPAHGC) form an RING-type 1 zinc finger. The segment at 228–289 (LKYQHLITNS…GENWHDPVKC (62 aa)) adopts an IBR-type zinc-finger fold. The RING-type 2; atypical zinc-finger motif lies at 316–347 (CPKCHVTIEKDGGCNHMVCRNQNCKAEFCWVC). C329 is a catalytic residue. Zn(2+) is bound by residues C334, C339, C344, C347, H354, and C361. The ariadne domain stretch occupies residues 380–529 (RAALQRYLFY…EKDLWEYIED (150 aa)).

It belongs to the RBR family. Ariadne subfamily. As to quaternary structure, interacts (via the first RING-type zinc finger) with ube2l3. Associates with cullin-RING ubiquitin ligase (CRL) complexes containing neddylated cullin.

It is found in the cytoplasm. The protein resides in the nucleus. The catalysed reaction is [E2 ubiquitin-conjugating enzyme]-S-ubiquitinyl-L-cysteine + [acceptor protein]-L-lysine = [E2 ubiquitin-conjugating enzyme]-L-cysteine + [acceptor protein]-N(6)-ubiquitinyl-L-lysine.. It functions in the pathway protein modification; protein ubiquitination. Its activity is regulated as follows. Autoinhibited by the ariadne domain, which masks the second RING-type zinc finger that contains the active site and inhibits the E3 activity. Inhibition is relieved upon binding to neddylated cullin-RING ubiquitin ligase complexes, which activate the E3 ligase activity of ARIH1. In terms of biological role, E3 ubiquitin-protein ligase, which catalyzes ubiquitination of target proteins together with ubiquitin-conjugating enzyme E2 ube2l3. Acts as an atypical E3 ubiquitin-protein ligase by working together with cullin-RING ubiquitin ligase (CRL) complexes and initiating ubiquitination of CRL substrates: associates with CRL complexes and specifically mediates addition of the first ubiquitin on CRLs targets. The initial ubiquitin is then elongated. E3 ubiquitin-protein ligase activity is activated upon binding to neddylated cullin-RING ubiquitin ligase complexes. The polypeptide is E3 ubiquitin-protein ligase arih1 (arih1) (Xenopus tropicalis (Western clawed frog)).